Reading from the N-terminus, the 565-residue chain is Urocanate hydratase (565 aa).

NAD(+) contacts are provided by residues 61-62, Gln-139, 185-187, Glu-205, Arg-210, 251-252, 272-276, 282-283, and Tyr-331; these read GG, GMG, NA, QTSAH, and YL. Cys-419 is a catalytic residue. The disordered stretch occupies residues 453 to 472; sequence LDSGSVASPNRETESMRDGS. Residues 463 to 472 show a composition bias toward basic and acidic residues; that stretch reads RETESMRDGS. Gly-501 lines the NAD(+) pocket.

The protein belongs to the urocanase family. It depends on NAD(+) as a cofactor.

The protein localises to the cytoplasm. It carries out the reaction 4-imidazolone-5-propanoate = trans-urocanate + H2O. It participates in amino-acid degradation; L-histidine degradation into L-glutamate; N-formimidoyl-L-glutamate from L-histidine: step 2/3. In terms of biological role, catalyzes the conversion of urocanate to 4-imidazolone-5-propionate. The sequence is that of Urocanate hydratase from Pseudomonas savastanoi pv. phaseolicola (strain 1448A / Race 6) (Pseudomonas syringae pv. phaseolicola (strain 1448A / Race 6)).